A 499-amino-acid chain; its full sequence is U4/U6 small nuclear ribonucleoprotein Prp31 (499 aa).

The interval 1–37 is disordered; sequence MSLADELLADLEEAAEEEEGGSYGEEEEEPAIEDVQE. A compositionally biased stretch (acidic residues) spans 7–37; it reads LLADLEEAAEEEEGGSYGEEEEEPAIEDVQE. Coiled coils occupy residues 85 to 120 and 181 to 215; these read EAAP…KYSK and EEEL…MSFI. Residues 215–333 form the Nop domain; the sequence is IAPNLSIIIG…IERKFDKWQE (119 aa). The interval 334-357 is disordered; it reads PPPVKQVKPLPAPLDGQRKKRGGR. Positions 351–364 match the Nuclear localization signal (NLS) motif; it reads RKKRGGRRYRKMKE. Residues Ser-379, Ser-395, and Ser-432 each carry the phosphoserine modification. Lys-438 carries the post-translational modification N6-acetyllysine. Ser-439 is subject to Phosphoserine. Position 440 is a phosphothreonine (Thr-440). Ser-450 is modified (phosphoserine). Residue Thr-455 is modified to Phosphothreonine. Residues Lys-471 and Lys-478 each participate in a glycyl lysine isopeptide (Lys-Gly) (interchain with G-Cter in SUMO2) cross-link.

It belongs to the PRP31 family. As to quaternary structure, identified in the spliceosome B complex. Component of the U4/U6-U5 tri-snRNP complex composed of the U4, U6 and U5 snRNAs and at least PRPF3, PRPF4, PRPF6, PRPF8, PRPF31, SNRNP200, TXNL4A, SNRNP40, DDX23, CD2BP2, PPIH, SNU13, EFTUD2, SART1 and USP39. Interacts with a complex formed by SNU13 and U4 snRNA, but not with SNU13 or U4 snRNA alone. The complex formed by SNU13 and PRPF31 also binds U4atac snRNA, a characteristic component of specific, less abundant spliceosomal complexes. Interacts with PRPF6/U5 snRNP-associated 102 kDa protein. Component of some MLL1/MLL complex, at least composed of the core components KMT2A/MLL1, ASH2L, HCFC1/HCF1, WDR5 and RBBP5, as well as the facultative components BACC1, CHD8, E2F6, HSP70, INO80C, KANSL1, LAS1L, MAX, MCRS1, MGA, KAT8/MOF, PELP1, PHF20, PRP31, RING2, RUVB1/TIP49A, RUVB2/TIP49B, SENP3, TAF1, TAF4, TAF6, TAF7, TAF9 and TEX10. Interacts (via its NLS) with CTNNBL1. Interacts with USH1G. Phosphorylated by PRP4K during spliceosome assembly. Ubiquitously expressed.

The protein resides in the nucleus. It localises to the nucleus speckle. The protein localises to the cajal body. Functionally, involved in pre-mRNA splicing as component of the spliceosome. Required for the assembly of the U4/U5/U6 tri-snRNP complex, one of the building blocks of the spliceosome. This chain is U4/U6 small nuclear ribonucleoprotein Prp31, found in Homo sapiens (Human).